We begin with the raw amino-acid sequence, 379 residues long: MEKLILRRVDRQNEEMILNFGPQHPSTHGVINFLVETDGEVLKRATPDVGYLHRSIEKIGEMVGYPGFMPYTDRVDYVAAMFANEGYAIAVERLLKIEVPQRAQWLRAISCELCRIASHLVSVGTMVMDIGAFTPMLHGIRERETINDLLEALCGARLTYNYHRIGGVAFDLPEGWRDKVLHFLDHFDKFLAEFDRLISFNEIYVKRLANVAVIPGPMAINYGLVGPNLRGSGVDWDVRRDLPYGAYPNFKFDVPVGKGFFGTSGDSFDRYYVRCLEMAESSKIVRQALDSLPEGEITAKVPRNIKPEAGEAIGRVESARGELAYYVISDGTNKAYRVRARTGSFTAMCIIEDISRGLMVADLVALISSLDVVAPEIDR.

This sequence belongs to the complex I 49 kDa subunit family. In terms of assembly, NDH-1 is composed of 14 different subunits. Subunits NuoB, C, D, E, F, and G constitute the peripheral sector of the complex.

Its subcellular location is the cell inner membrane. The enzyme catalyses a quinone + NADH + 5 H(+)(in) = a quinol + NAD(+) + 4 H(+)(out). In terms of biological role, NDH-1 shuttles electrons from NADH, via FMN and iron-sulfur (Fe-S) centers, to quinones in the respiratory chain. The immediate electron acceptor for the enzyme in this species is believed to be ubiquinone. Couples the redox reaction to proton translocation (for every two electrons transferred, four hydrogen ions are translocated across the cytoplasmic membrane), and thus conserves the redox energy in a proton gradient. The polypeptide is NADH-quinone oxidoreductase subunit D 1 (Anaeromyxobacter sp. (strain K)).